We begin with the raw amino-acid sequence, 303 residues long: Pycsar effector protein BcPycTIR (303 aa).

Residue 22–138 (KLVGGDKGLA…RRMAKELSKR (117 aa)) participates in a nucleoside 3',5'-cyclic phosphate binding. The tract at residues 154 to 273 (RVFVISSAEA…DMAGVTTIPY (120 aa)) is TIR-like.

As to quaternary structure, purified protein forms large 2-dimensional sheets when incubated with cUMP and shorter filaments in the presence of cCMP.

The protein resides in the cytoplasm. It carries out the reaction NAD(+) + H2O = ADP-D-ribose + nicotinamide + H(+). With respect to regulation, activated by cyclic UMP (cUMP) and to a lesser extent by cCMP. In terms of biological role, pycsar (pyrimidine cyclase system for antiphage resistance) provides immunity against bacteriophage. The pyrimidine cyclase (PycC) synthesizes cyclic nucleotides in response to infection; these serve as specific second messenger signals. The signals activate the adjacent effector, leading to bacterial cell death and abortive phage infection. A clade B Pycsar system. The effector protein of a two-gene Pycsar system. Upon activation by cyclic UMP (cUMP) degrades cellular NAD(+). Expression of this and adjacent uridylate cyclase BcPycC (AC A0A0J5ZXG5) probably confers resistance to bacteriophage. The genes are probably only expressed in response to bacteriophage infection. This protein probably only responds to cUMP (produced by its cognate NTP cyclase). This is Pycsar effector protein BcPycTIR from Burkholderia cepacia (Pseudomonas cepacia).